Here is a 136-residue protein sequence, read N- to C-terminus: MANFKVVVSDPKEARAYQIDIKDAEANALIGKSIGDVVDGSIFGLAGYKVQITGGCDGSGFVMKPDLPGPRRQRILTATGVGYVPKLPGQRRRKMMRGKEIAPDIVQVNAKVVEYGSKSIKALLGLETAEEAPAAE.

Belongs to the eukaryotic ribosomal protein eS6 family.

The polypeptide is Small ribosomal subunit protein eS6 (Methanosarcina mazei (strain ATCC BAA-159 / DSM 3647 / Goe1 / Go1 / JCM 11833 / OCM 88) (Methanosarcina frisia)).